A 198-amino-acid chain; its full sequence is Na(+)-translocating NADH-quinone reductase subunit E (198 aa).

6 helical membrane passes run 11-31 (SIFI…FLAV), 40-60 (GLGI…NLVF), 77-97 (FLGF…LEMF), 110-130 (GIFL…SFMV), 140-160 (VVYG…MAAI), and 176-196 (LGIT…FSGI).

Belongs to the NqrDE/RnfAE family. In terms of assembly, composed of six subunits; NqrA, NqrB, NqrC, NqrD, NqrE and NqrF.

It localises to the cell inner membrane. The enzyme catalyses a ubiquinone + n Na(+)(in) + NADH + H(+) = a ubiquinol + n Na(+)(out) + NAD(+). NQR complex catalyzes the reduction of ubiquinone-1 to ubiquinol by two successive reactions, coupled with the transport of Na(+) ions from the cytoplasm to the periplasm. NqrA to NqrE are probably involved in the second step, the conversion of ubisemiquinone to ubiquinol. The chain is Na(+)-translocating NADH-quinone reductase subunit E from Tolumonas auensis (strain DSM 9187 / NBRC 110442 / TA 4).